A 380-amino-acid polypeptide reads, in one-letter code: PqqA peptide cyclase (380 aa).

The Radical SAM core domain occupies 12-228 (FGIPLAVLLE…EEARERLKGR (217 aa)). 3 residues coordinate [4Fe-4S] cluster: Cys26, Cys30, and Cys33.

This sequence belongs to the radical SAM superfamily. PqqE family. As to quaternary structure, interacts with PqqD. The interaction is necessary for activity of PqqE. [4Fe-4S] cluster is required as a cofactor.

The enzyme catalyses [PQQ precursor protein] + S-adenosyl-L-methionine = E-Y cross-linked-[PQQ precursor protein] + 5'-deoxyadenosine + L-methionine + H(+). Its pathway is cofactor biosynthesis; pyrroloquinoline quinone biosynthesis. In terms of biological role, catalyzes the cross-linking of a glutamate residue and a tyrosine residue in the PqqA protein as part of the biosynthesis of pyrroloquinoline quinone (PQQ). The sequence is that of PqqA peptide cyclase from Bradyrhizobium diazoefficiens (strain JCM 10833 / BCRC 13528 / IAM 13628 / NBRC 14792 / USDA 110).